We begin with the raw amino-acid sequence, 200 residues long: GTP cyclohydrolase-2 (200 aa).

Residue 50-54 (RVHSE) coordinates GTP. Zn(2+) contacts are provided by Cys55, Cys66, and Cys68. Residues Gln71, 93–95 (EGR), and Thr115 each bind GTP. Residue Asp127 is the Proton acceptor of the active site. The active-site Nucleophile is the Arg129. Thr150 and Lys155 together coordinate GTP.

The protein belongs to the GTP cyclohydrolase II family. The cofactor is Zn(2+).

It catalyses the reaction GTP + 4 H2O = 2,5-diamino-6-hydroxy-4-(5-phosphoribosylamino)-pyrimidine + formate + 2 phosphate + 3 H(+). It participates in cofactor biosynthesis; riboflavin biosynthesis; 5-amino-6-(D-ribitylamino)uracil from GTP: step 1/4. Its function is as follows. Catalyzes the conversion of GTP to 2,5-diamino-6-ribosylamino-4(3H)-pyrimidinone 5'-phosphate (DARP), formate and pyrophosphate. In Acinetobacter baumannii (strain AB0057), this protein is GTP cyclohydrolase-2.